A 299-amino-acid polypeptide reads, in one-letter code: Xyloglucan endotransglucosylase protein 6 (299 aa).

The first 25 residues, 1-25 (MASSLTLPMAMAFTLLALSFASAMG), serve as a signal peptide directing secretion. One can recognise a GH16 domain in the interval 26–219 (GSMNSSRFDE…WSHAPFVASY (194 aa)). Residue Glu-105 is the Nucleophile of the active site. Residue Glu-109 is the Proton donor of the active site. Residue Glu-109 participates in xyloglucan binding. The N-linked (GlcNAc...) asparagine glycan is linked to Asn-113. Xyloglucan is bound by residues 122 to 124 (QTN), 132 to 134 (NRE), 198 to 199 (DW), and Gly-203. 2 cysteine pairs are disulfide-bonded: Cys-227–Cys-242 and Cys-281–Cys-294. Residue Arg-286 participates in xyloglucan binding.

The protein belongs to the glycosyl hydrolase 16 family. XTH group 1 subfamily. In terms of processing, contains at least one intrachain disulfide bond essential for its enzymatic activity. As to expression, highest expression in ripe leaves after full expansion. Also expressed in fruits, and at a lower level in flowers and stems (picked at anthesis).

The protein resides in the secreted. Its subcellular location is the cell wall. It localises to the extracellular space. It is found in the apoplast. It catalyses the reaction breaks a beta-(1-&gt;4) bond in the backbone of a xyloglucan and transfers the xyloglucanyl segment on to O-4 of the non-reducing terminal glucose residue of an acceptor, which can be a xyloglucan or an oligosaccharide of xyloglucan.. Its function is as follows. Catalyzes xyloglucan endotransglycosylation (XET). Cleaves and religates xyloglucan polymers. Does not catalyze xyloglucan endohydrolysis (XEH). Probably involved in cell wall restructuring during postharvest fruit softening. The sequence is that of Xyloglucan endotransglucosylase protein 6 from Diospyros kaki (Kaki persimmon).